The sequence spans 478 residues: Endoglucanase 18 (478 aa).

Residues 1 to 21 form the signal peptide; the sequence is MGKLLVVMLIGMFLAFESLEA. The N-linked (GlcNAc...) asparagine glycan is linked to asparagine 29. The Nucleophile role is filled by aspartate 76. Histidine 398 is an active-site residue. The tract at residues 433–452 is disordered; it reads HTGAIVGGPNSSDQYSDKRT. Residue asparagine 442 is glycosylated (N-linked (GlcNAc...) asparagine). Active-site residues include aspartate 449 and glutamate 458.

It belongs to the glycosyl hydrolase 9 (cellulase E) family.

It localises to the secreted. It catalyses the reaction Endohydrolysis of (1-&gt;4)-beta-D-glucosidic linkages in cellulose, lichenin and cereal beta-D-glucans.. This chain is Endoglucanase 18, found in Arabidopsis thaliana (Mouse-ear cress).